The chain runs to 230 residues: PKHD-type hydroxylase PD_1553 (230 aa).

The Fe2OG dioxygenase domain maps to 78 to 182 (RTLPPRFNRY…RIASFFWVQS (105 aa)). Fe cation contacts are provided by histidine 96, aspartate 98, and histidine 163. Arginine 173 serves as a coordination point for 2-oxoglutarate.

Fe(2+) is required as a cofactor. The cofactor is L-ascorbate.

The protein is PKHD-type hydroxylase PD_1553 of Xylella fastidiosa (strain Temecula1 / ATCC 700964).